The following is a 409-amino-acid chain: Tyrosine--tRNA ligase (409 aa).

The 'HIGH' region motif lies at 54–63 (PTAPDIHLGH). A 'KMSKS' region motif is present at residues 238–242 (KMSKS). Lysine 241 contacts ATP. One can recognise an S4 RNA-binding domain in the interval 347–407 (QGILRILREA…GKRKFARVKL (61 aa)).

The protein belongs to the class-I aminoacyl-tRNA synthetase family. TyrS type 2 subfamily. In terms of assembly, homodimer.

The protein localises to the cytoplasm. The enzyme catalyses tRNA(Tyr) + L-tyrosine + ATP = L-tyrosyl-tRNA(Tyr) + AMP + diphosphate + H(+). Catalyzes the attachment of tyrosine to tRNA(Tyr) in a two-step reaction: tyrosine is first activated by ATP to form Tyr-AMP and then transferred to the acceptor end of tRNA(Tyr). This chain is Tyrosine--tRNA ligase, found in Bordetella parapertussis (strain 12822 / ATCC BAA-587 / NCTC 13253).